The chain runs to 188 residues: Large ribosomal subunit protein eL18 (188 aa).

This sequence belongs to the eukaryotic ribosomal protein eL18 family.

It localises to the cytoplasm. This chain is Large ribosomal subunit protein eL18 (RpL18), found in Drosophila melanogaster (Fruit fly).